The chain runs to 305 residues: Putative monooxygenase p33MONOX (305 aa).

Disordered stretches follow at residues M1 to M20 and L37 to K56. T44 is subject to Phosphothreonine. Positions L67–L77 match the Flavin-containing monooxygenase motif motif. A disordered region spans residues S159 to F305. A compositionally biased stretch (low complexity) spans P169–S183. Position 175 is a phosphothreonine (T175). 2 positions are modified to phosphoserine: S182 and S183. Composition is skewed to polar residues over residues W191 to S210 and K233 to A243.

The protein belongs to the P33MONOX family. As to quaternary structure, interacts with NELFB, NOL12 and PRNP.

The protein resides in the cytoplasm. Potential NADPH-dependent oxidoreductase. May be involved in the regulation of neuronal survival, differentiation and axonal outgrowth. In Pongo abelii (Sumatran orangutan), this protein is Putative monooxygenase p33MONOX (P33MONOX).